Consider the following 189-residue polypeptide: Elongation factor P (189 aa).

This sequence belongs to the elongation factor P family.

The protein resides in the cytoplasm. The protein operates within protein biosynthesis; polypeptide chain elongation. Functionally, involved in peptide bond synthesis. Stimulates efficient translation and peptide-bond synthesis on native or reconstituted 70S ribosomes in vitro. Probably functions indirectly by altering the affinity of the ribosome for aminoacyl-tRNA, thus increasing their reactivity as acceptors for peptidyl transferase. This is Elongation factor P from Aster yellows witches'-broom phytoplasma (strain AYWB).